A 375-amino-acid polypeptide reads, in one-letter code: Glutamate 5-kinase (375 aa).

Lys-3 serves as a coordination point for ATP. Positions 44, 131, and 143 each coordinate substrate. ATP is bound by residues 163–164 (SD) and 205–211 (TGGMVTK). In terms of domain architecture, PUA spans 269–346 (EGTLWVDDGA…GDIEALLGYR (78 aa)).

It belongs to the glutamate 5-kinase family.

It is found in the cytoplasm. The catalysed reaction is L-glutamate + ATP = L-glutamyl 5-phosphate + ADP. Its pathway is amino-acid biosynthesis; L-proline biosynthesis; L-glutamate 5-semialdehyde from L-glutamate: step 1/2. In terms of biological role, catalyzes the transfer of a phosphate group to glutamate to form L-glutamate 5-phosphate. This chain is Glutamate 5-kinase, found in Rhodospirillum rubrum (strain ATCC 11170 / ATH 1.1.1 / DSM 467 / LMG 4362 / NCIMB 8255 / S1).